The chain runs to 220 residues: Vesicle-associated protein 2-1 (220 aa).

Methionine 1 is subject to N-acetylmethionine. Topologically, residues 1–196 are cytoplasmic; that stretch reads MTGVGENQLI…RNSGNGLSLK (196 aa). Threonine 2 carries the post-translational modification N-acetylthreonine; in Vesicle-associated protein 2-1, N-terminally processed. One can recognise an MSP domain in the interval 9 to 129; the sequence is LISIQPDELK…TECKLKVSYI (121 aa). The disordered stretch occupies residues 133–154; that stretch reads TTQRSSESGATNGDGQSSETIS. Residues 153–188 adopt a coiled-coil conformation; the sequence is ISTIQRLKEERDAAVKQTQQLQHELETVRRRRNQRN. A helical; Anchor for type IV membrane protein membrane pass occupies residues 197–217; sequence LAAMVGLIGLIIGFILKLTLA.

This sequence belongs to the VAMP-associated protein (VAP) (TC 9.B.17) family.

Its subcellular location is the endoplasmic reticulum membrane. May play a role in vesicle trafficking. The polypeptide is Vesicle-associated protein 2-1 (PVA21) (Arabidopsis thaliana (Mouse-ear cress)).